A 581-amino-acid chain; its full sequence is Zinc finger protein 674 (581 aa).

A KRAB domain is found at L8 to A79. C2H2-type zinc fingers lie at residues Y224–H246, Y252–H274, Y280–H302, and F308–H330. The span at P357–S371 shows a compositional bias: basic and acidic residues. Residues P357 to R377 are disordered. 7 consecutive C2H2-type zinc fingers follow at residues Y385–H407, Y413–H435, Y441–H463, Y469–H491, Y497–H519, Y525–H547, and Y553–H575.

Belongs to the krueppel C2H2-type zinc-finger protein family. In terms of tissue distribution, expressed in testis.

Its subcellular location is the nucleus. May be involved in transcriptional regulation. The chain is Zinc finger protein 674 (ZNF674) from Homo sapiens (Human).